We begin with the raw amino-acid sequence, 191 residues long: MALKIAQELRAGNVFMIGNDAMVVLKTEYSRSGRSGAVVKMKYKNLLTGAGGESVFNADDKMDQVILEKKEAEYSYFDGTMYVFMDPVTYEQYNVEPAAMGSALNYLQDGMKVEVTFYNENAISVELPTTVVREIVYTEPAVKGDTSSGKVLKAARINDNEEFTIMVPLFCNIGEKIEIDTRTDEYRSRAK.

It belongs to the elongation factor P family.

The protein resides in the cytoplasm. It functions in the pathway protein biosynthesis; polypeptide chain elongation. Involved in peptide bond synthesis. Stimulates efficient translation and peptide-bond synthesis on native or reconstituted 70S ribosomes in vitro. Probably functions indirectly by altering the affinity of the ribosome for aminoacyl-tRNA, thus increasing their reactivity as acceptors for peptidyl transferase. The sequence is that of Elongation factor P from Ralstonia pickettii (strain 12J).